Here is a 158-residue protein sequence, read N- to C-terminus: Arginine repressor (158 aa).

It belongs to the ArgR family.

Its subcellular location is the cytoplasm. It functions in the pathway amino-acid biosynthesis; L-arginine biosynthesis [regulation]. Regulates arginine biosynthesis genes. This Anaeromyxobacter sp. (strain Fw109-5) protein is Arginine repressor.